A 1450-amino-acid polypeptide reads, in one-letter code: Inactive serine/threonine-protein kinase TEX14 (1450 aa).

3 ANK repeats span residues 27–54 (LHEYAKQGNCVKLKKILKKGVCVDAVNT), 55–84 (QGQSALFVAALLGHVKLVDVLVDYGSDPNH), and 88–117 (DGSTPVHAAAFSGNQWILSKLLTAGGDLRL). 2 positions are modified to phosphoserine: S175 and S186. In terms of domain architecture, Protein kinase spans 199 to 512 (IISAQNIYSF…ILKNDLKEFI (314 aa)). ATP is bound by residues 205 to 213 (IYSFGFGKF) and K267. The residue at position 431 (S431) is a Phosphoserine; by PLK1. Residues S561 and S662 each carry the phosphoserine modification. Residues 700–720 (SDSLGSLNLPEPTREAKGKTS) are disordered. Positions 791–797 (GPPSLAY) match the GPPX3Y motif. Disordered stretches follow at residues 852–906 (VSEE…MASV), 947–977 (PPWNPQSSAPFESKVENESTPLPRPPIRGPE), 992–1012 (DEPKGNTKFGKMDNSDCDKNK), and 1035–1062 (QPEQNEASQASCDTSVGTEKFYSTSSPI). Composition is skewed to polar residues over residues 875-886 (KQSTGEQLPSTQ) and 894-906 (KNTNQNSRSMASV). Residues 889-897 (RESLEKNTN) carry the D-box motif. Over residues 992–1011 (DEPKGNTKFGKMDNSDCDKN) the composition is skewed to basic and acidic residues. Residues 1038–1061 (QNEASQASCDTSVGTEKFYSTSSP) show a composition bias toward polar residues. A phosphoserine mark is found at S1060 and S1221. 2 disordered regions span residues 1261–1282 (THATKRKSLPRELAEATSQQHL) and 1300–1418 (KQQQ…SLGT). Composition is skewed to polar residues over residues 1300 to 1311 (KQQQVSSLASHE) and 1332 to 1344 (TNSSKDSSFLSSR). S1357 and S1358 each carry phosphoserine. Composition is skewed to basic and acidic residues over residues 1383–1397 (STREKKNKDQDVVEQ) and 1404–1413 (SIKPERRESD). Residues S1412 and S1449 each carry the phosphoserine modification.

Belongs to the protein kinase superfamily. In terms of assembly, interacts with KIF23 and RBM44. Interacts with CEP55; inhibiting interaction between CEP55 and PDCD6IP/ALIX and TSG101. Phosphorylated on Thr residues by CDK1 during early phases of mitosis, promoting the interaction with PLK1 and recruitment to kinetochores. Phosphorylated on Ser-431 by PLK1 during late prometaphase promotes the rapid depletion from kinetochores and its subsequent degradation by the APC/C complex. In terms of tissue distribution, detected in testis and spermatogonia. Not detectable in the other tissues tested.

It is found in the cytoplasm. The protein localises to the midbody. Its subcellular location is the chromosome. It localises to the centromere. The protein resides in the kinetochore. Required both for the formation of intercellular bridges during meiosis and for kinetochore-microtubule attachment during mitosis. Intercellular bridges are evolutionarily conserved structures that connect differentiating germ cells and are required for spermatogenesis and male fertility. Acts by promoting the conversion of midbodies into intercellular bridges via its interaction with CEP55: interaction with CEP55 inhibits the interaction between CEP55 and PDCD6IP/ALIX and TSG101, blocking cell abscission and leading to transform midbodies into intercellular bridges. Also plays a role during mitosis: recruited to kinetochores by PLK1 during early mitosis and regulates the maturation of the outer kinetochores and microtubule attachment. Has no protein kinase activity in vitro. The protein is Inactive serine/threonine-protein kinase TEX14 (Tex14) of Mus musculus (Mouse).